The sequence spans 334 residues: MSKNNYYPYPPTLGKVFLFKRGPEIVSMESSETIQPADKLESILNSTSTITAELLFNTFDIPGISSKTDKLKLLFQKAFEQGINPNIQDSSGNTLLLYACQSSLVEVVQFLLKKGANPNISNNSDNTPLSKIISNRFIDKTEIYIAKLLLQNGALTELKDFVGFTPIQSATQYGHTEIVKSLIQNGADINVIASIETNSYYSGKSLVESVPSNKPELKALLTLTKACKDNNFSIVDNTITAKDIVEFIDWQLSITPENSRFFDKHLSELDNLKNFLETKELVSNETIQKINEHITSYSTTEISSPDVTPSFINEAEHQEYNLAGETDKSAPETA.

ANK repeat units follow at residues 80–90, 91–120, 124–161, and 162–191; these read EQGINPNIQDS, SGNTLLLYACQSSLVEVVQFLLKKGANPNI, SDNTPLSKIISNRFIDKTEIYIAKLLLQNGALTELKDF, and VGFTPIQSATQYGHTEIVKSLIQNGADINV.

In Rickettsia bellii (strain RML369-C), this protein is Putative ankyrin repeat protein RBE_0347.